A 152-amino-acid polypeptide reads, in one-letter code: UPF0178 protein KPN78578_03210 (152 aa).

It belongs to the UPF0178 family.

In Klebsiella pneumoniae subsp. pneumoniae (strain ATCC 700721 / MGH 78578), this protein is UPF0178 protein KPN78578_03210.